The following is a 231-amino-acid chain: Lipoprotein-releasing system ATP-binding protein LolD (231 aa).

Residues 6 to 231 enclose the ABC transporter domain; it reads LQVQAVSKSY…YLQAVAEHAQ (226 aa). An ATP-binding site is contributed by 42–49; that stretch reads GTSGSGKS.

It belongs to the ABC transporter superfamily. Lipoprotein translocase (TC 3.A.1.125) family. As to quaternary structure, the complex is composed of two ATP-binding proteins (LolD) and two transmembrane proteins (LolC and LolE).

It localises to the cell inner membrane. Functionally, part of the ABC transporter complex LolCDE involved in the translocation of mature outer membrane-directed lipoproteins, from the inner membrane to the periplasmic chaperone, LolA. Responsible for the formation of the LolA-lipoprotein complex in an ATP-dependent manner. The protein is Lipoprotein-releasing system ATP-binding protein LolD of Shewanella sp. (strain MR-4).